The chain runs to 288 residues: Protease HtpX (288 aa).

A run of 2 helical transmembrane segments spans residues 5–25 and 35–55; these read IALF…VMSL and GLLV…LLLS. H140 provides a ligand contact to Zn(2+). The active site involves E141. H144 serves as a coordination point for Zn(2+). 2 consecutive transmembrane segments (helical) span residues 155–175 and 194–214; these read LLQG…GGII and IIVF…SMWF. E219 contacts Zn(2+).

The protein belongs to the peptidase M48B family. Requires Zn(2+) as cofactor.

It localises to the cell inner membrane. The sequence is that of Protease HtpX from Stenotrophomonas maltophilia (strain K279a).